The primary structure comprises 217 residues: MEAENEAHCCPGSSSGGSREYKVVMLGAGGVGKSAVTMQFISHQFPDYHDPTIEDAYKTQVRIDNEPAYLDILDTAGQAEFTAMREQYMRGGEGFIICYSVTDRQSFQEAAKFKELIFQVRHTYEIPLVLVGNKIDLEQFRQVSTEEGMTLARDYNCAFFETSAALRFGIDDAFQGLVREIRRKESMLSLVERKLKRKDSLWKKIKASLKKKRENMI.

Residues 27-34 (GAGGVGKS), 74-78 (DTAGQ), and 133-136 (NKID) contribute to the GTP site.

It belongs to the small GTPase superfamily. Ras family. As to quaternary structure, interacts with AFDN, the C-terminal domain of RALGDS and RLF, but not with RIN1 and PIK3CA. RLF binds exclusively to the active GTP-bound form. Binds calmodulin. Interacts with PLXNB3.

It is found in the nucleus. The protein resides in the cell membrane. The enzyme catalyses GTP + H2O = GDP + phosphate + H(+). Its activity is regulated as follows. Alternates between an inactive form bound to GDP and an active form bound to GTP. Binds and exchanges GTP and GDP. The polypeptide is GTP-binding protein Rit2 (Rit2) (Rattus norvegicus (Rat)).